A 207-amino-acid polypeptide reads, in one-letter code: LexA repressor (207 aa).

The H-T-H motif DNA-binding region spans 28–48 (RAEISRELGFKSANAAEEHLK). Catalysis depends on for autocatalytic cleavage activity residues Ser-123 and Lys-160.

It belongs to the peptidase S24 family. In terms of assembly, homodimer.

It carries out the reaction Hydrolysis of Ala-|-Gly bond in repressor LexA.. Functionally, represses a number of genes involved in the response to DNA damage (SOS response), including recA and lexA. In the presence of single-stranded DNA, RecA interacts with LexA causing an autocatalytic cleavage which disrupts the DNA-binding part of LexA, leading to derepression of the SOS regulon and eventually DNA repair. The chain is LexA repressor from Haemophilus influenzae (strain ATCC 51907 / DSM 11121 / KW20 / Rd).